The chain runs to 177 residues: Mitochondrial inner membrane protease subunit 2 (177 aa).

Residues serine 41 and lysine 91 contribute to the active site. A helical transmembrane segment spans residues 134–152 (TFGPISSGLVIGKAITIVW).

Belongs to the peptidase S26 family. IMP2 subfamily. As to quaternary structure, component of the mitochondrial inner membrane peptidase (IMP) complex which at least consists of IMP1, IMP2 and SOM1. The N-terminus is blocked.

The protein localises to the mitochondrion inner membrane. Functionally, catalytic component of the mitochondrial inner membrane peptidase (IMP) complex. IMP catalyzes the removal of signal peptides required for the targeting of proteins from the mitochondrial matrix, across the inner membrane, into the inter-membrane space. The two catalytic IMP subunits seem to have non-overlapping substrate specificities. IMP2 substrates include nuclear encoded CYB2, mitochondrially encoded COX2 and cytochrome c1. Required for the stability of IMP1. The sequence is that of Mitochondrial inner membrane protease subunit 2 (IMP2) from Saccharomyces cerevisiae (strain ATCC 204508 / S288c) (Baker's yeast).